A 295-amino-acid polypeptide reads, in one-letter code: Protein FAM110A (295 aa).

2 disordered regions span residues 117–148 (PVSP…PPSI) and 160–191 (PASP…KSDL). Pro residues-rich tracts occupy residues 138–147 (LATPPRPPPS) and 160–171 (PASPIQPCPSPG).

This sequence belongs to the FAM110 family. In terms of assembly, may interact with CSPP1.

The protein localises to the cytoplasm. Its subcellular location is the cytoskeleton. It is found in the microtubule organizing center. The protein resides in the centrosome. It localises to the spindle pole. This Bos taurus (Bovine) protein is Protein FAM110A (FAM110A).